Consider the following 282-residue polypeptide: Large ribosomal subunit protein uL4c (282 aa).

The N-terminal 49 residues, 1-49 (MASSATAPNSLSFFSSSLFLSSSHQIPKTYISVSKLGSGRVSKPLSVSS), are a transit peptide targeting the chloroplast. Residues 106–138 (EVRGGGIKPYSQKKTGHARRGSQRTPLRPGGGV) form a disordered region.

Belongs to the universal ribosomal protein uL4 family. In terms of assembly, part of the 50S ribosomal subunit.

It is found in the plastid. It localises to the chloroplast. Functionally, this protein binds directly and specifically to 23S rRNA. May play a role in plastid transcriptional regulation. This Arabidopsis thaliana (Mouse-ear cress) protein is Large ribosomal subunit protein uL4c (RPL4).